Here is a 249-residue protein sequence, read N- to C-terminus: 1-(5-phosphoribosyl)-5-[(5-phosphoribosylamino)methylideneamino] imidazole-4-carboxamide isomerase (249 aa).

Asp8 functions as the Proton acceptor in the catalytic mechanism. Asp131 (proton donor) is an active-site residue.

This sequence belongs to the HisA/HisF family.

It is found in the cytoplasm. It carries out the reaction 1-(5-phospho-beta-D-ribosyl)-5-[(5-phospho-beta-D-ribosylamino)methylideneamino]imidazole-4-carboxamide = 5-[(5-phospho-1-deoxy-D-ribulos-1-ylimino)methylamino]-1-(5-phospho-beta-D-ribosyl)imidazole-4-carboxamide. It participates in amino-acid biosynthesis; L-histidine biosynthesis; L-histidine from 5-phospho-alpha-D-ribose 1-diphosphate: step 4/9. The protein is 1-(5-phosphoribosyl)-5-[(5-phosphoribosylamino)methylideneamino] imidazole-4-carboxamide isomerase of Aromatoleum aromaticum (strain DSM 19018 / LMG 30748 / EbN1) (Azoarcus sp. (strain EbN1)).